The primary structure comprises 452 residues: mRNA export factor ICP27 homolog (452 aa).

The disordered stretch occupies residues 42–164 (EAIGSTPGED…RNDQTHDESY (123 aa)). The span at 98-107 (SNHHGGRDVE) shows a compositional bias: basic and acidic residues. Over residues 129–144 (SRKHRDRSLSNRRRRP) the composition is skewed to basic residues. Over residues 154-164 (ERNDQTHDESY) the composition is skewed to basic and acidic residues. Residues Cys335, His417, Cys421, and Cys426 each contribute to the Zn(2+) site. Residues 335 to 426 (CLLLNRDNDL…HQRECGRVEC (92 aa)) form a CHC2-type zinc finger.

It belongs to the HHV-1 ICP27 protein family. As to quaternary structure, homodimer. Homodimerization is required for transactivation. Associates in a complex with RNA, and host export factors NXF1/TAP and ALYREF; these interactions allow nuclear export of viral transcripts. Interacts with three host shuttling SR proteins SRSF1, SRSF3 and SRSF7. Interacts with host SRPK1. Interacts with IE62; this interaction enhances IE62 transactivation. Phosphorylated in vitro by SRPK1.

It localises to the host cytoplasm. It is found in the host nucleus. In terms of biological role, multifunctional regulator of the expression of viral genes that mediates nuclear export of viral intronless mRNAs. This immediate early (EI) protein promotes the nuclear export of viral intronless mRNAs by interacting with mRNAs and host NXF1/TAP. In Varicella-zoster virus (strain Dumas) (HHV-3), this protein is mRNA export factor ICP27 homolog.